The sequence spans 276 residues: Diaminopimelate epimerase (276 aa).

Substrate contacts are provided by N13, Q46, and N66. Residue C75 is the Proton donor of the active site. Residues G76–N77, N159, N192, and E210–R211 contribute to the substrate site. Residue C219 is the Proton acceptor of the active site. Position 220–221 (G220–T221) interacts with substrate.

It belongs to the diaminopimelate epimerase family. In terms of assembly, homodimer.

It localises to the cytoplasm. The enzyme catalyses (2S,6S)-2,6-diaminopimelate = meso-2,6-diaminopimelate. The protein operates within amino-acid biosynthesis; L-lysine biosynthesis via DAP pathway; DL-2,6-diaminopimelate from LL-2,6-diaminopimelate: step 1/1. Catalyzes the stereoinversion of LL-2,6-diaminopimelate (L,L-DAP) to meso-diaminopimelate (meso-DAP), a precursor of L-lysine and an essential component of the bacterial peptidoglycan. The chain is Diaminopimelate epimerase from Pseudomonas syringae pv. syringae (strain B728a).